A 552-amino-acid chain; its full sequence is Dihydroxy-acid dehydratase (552 aa).

Residue Asp-78 coordinates Mg(2+). Cys-119 serves as a coordination point for [2Fe-2S] cluster. Positions 120 and 121 each coordinate Mg(2+). N6-carboxylysine is present on Lys-121. Cys-191 provides a ligand contact to [2Fe-2S] cluster. Glu-442 contacts Mg(2+). The active-site Proton acceptor is Ser-468.

It belongs to the IlvD/Edd family. As to quaternary structure, homodimer. Requires [2Fe-2S] cluster as cofactor. It depends on Mg(2+) as a cofactor.

The enzyme catalyses (2R)-2,3-dihydroxy-3-methylbutanoate = 3-methyl-2-oxobutanoate + H2O. The catalysed reaction is (2R,3R)-2,3-dihydroxy-3-methylpentanoate = (S)-3-methyl-2-oxopentanoate + H2O. The protein operates within amino-acid biosynthesis; L-isoleucine biosynthesis; L-isoleucine from 2-oxobutanoate: step 3/4. It participates in amino-acid biosynthesis; L-valine biosynthesis; L-valine from pyruvate: step 3/4. Functionally, functions in the biosynthesis of branched-chain amino acids. Catalyzes the dehydration of (2R,3R)-2,3-dihydroxy-3-methylpentanoate (2,3-dihydroxy-3-methylvalerate) into 2-oxo-3-methylpentanoate (2-oxo-3-methylvalerate) and of (2R)-2,3-dihydroxy-3-methylbutanoate (2,3-dihydroxyisovalerate) into 2-oxo-3-methylbutanoate (2-oxoisovalerate), the penultimate precursor to L-isoleucine and L-valine, respectively. The chain is Dihydroxy-acid dehydratase from Moorella thermoacetica (strain ATCC 39073 / JCM 9320).